We begin with the raw amino-acid sequence, 363 residues long: MQLLQSSVIAATVGAALVAAVPVELEARDSCTFTSAADAKSGKTSCSTITLSNIEVPAGETLDLTGLNDGTTVIFSGETTFGYKEWEGPLISVSGTNIKVQQASGAKIDGDGSRWWDGKGGNGGKTKPKFFYAHKLDSSSITGLQIYNTPVQGFSIQSDNLNITDVTIDNSAGTAEGHNTDAFDVGSSTYINIDGATVYNQDDCLAINSGSHITFTNGYCDGGHGLSIGSVGGRSDNTVEDVTISNSKVVNSQNGVRIKTVYDATGTVSNVKFEDITLSGITKYGLIVEQDYENGSPTGTPTNGIKVSDITFDKVTGTVESDATDIYILCGSGSCTDWTWSGVSITGGKTSSKCENVPTGASC.

The signal sequence occupies residues 1 to 20 (MQLLQSSVIAATVGAALVAA). Positions 21-28 (VPVELEAR) are excised as a propeptide. Cys31 and Cys46 are joined by a disulfide. PbH1 repeat units follow at residues 158 to 187 (SDNL…DVGS), 188 to 209 (STYI…AINS), 210 to 230 (GSHI…SIGS), 239 to 260 (VEDV…RIKT), 268 to 290 (VSNV…IVEQ), and 302 to 347 (TNGI…SITG). Asn162 is a glycosylation site (N-linked (GlcNAc...) asparagine). Asp202 acts as the Proton donor in catalysis. Cys204 and Cys220 form a disulfide bridge. The active site involves His224. Cystine bridges form between Cys330/Cys335 and Cys354/Cys363.

The protein belongs to the glycosyl hydrolase 28 family.

Its subcellular location is the secreted. It catalyses the reaction (1,4-alpha-D-galacturonosyl)n+m + H2O = (1,4-alpha-D-galacturonosyl)n + (1,4-alpha-D-galacturonosyl)m.. In terms of biological role, involved in maceration and soft-rotting of plant tissue. Hydrolyzes the 1,4-alpha glycosidic bonds of de-esterified pectate in the smooth region of the plant cell wall. This chain is Probable endopolygalacturonase B (pgaB), found in Aspergillus flavus (strain ATCC 200026 / FGSC A1120 / IAM 13836 / NRRL 3357 / JCM 12722 / SRRC 167).